We begin with the raw amino-acid sequence, 293 residues long: Ribosomal RNA small subunit methyltransferase A (293 aa).

S-adenosyl-L-methionine is bound by residues Asn29, Leu31, Gly56, Glu77, Asp102, and Asn127.

This sequence belongs to the class I-like SAM-binding methyltransferase superfamily. rRNA adenine N(6)-methyltransferase family. RsmA subfamily.

It localises to the cytoplasm. It carries out the reaction adenosine(1518)/adenosine(1519) in 16S rRNA + 4 S-adenosyl-L-methionine = N(6)-dimethyladenosine(1518)/N(6)-dimethyladenosine(1519) in 16S rRNA + 4 S-adenosyl-L-homocysteine + 4 H(+). In terms of biological role, specifically dimethylates two adjacent adenosines (A1518 and A1519) in the loop of a conserved hairpin near the 3'-end of 16S rRNA in the 30S particle. May play a critical role in biogenesis of 30S subunits. The sequence is that of Ribosomal RNA small subunit methyltransferase A from Geobacillus thermodenitrificans (strain NG80-2).